Consider the following 112-residue polypeptide: Cryptic phage CTXphi transcriptional repressor RstR (112 aa).

Residues 7-61 (LANQRKAINKTQAQMADEIGISLTSYKKYESGEGLPTMENLVKIADALEISIDEL) form the HTH cro/C1-type domain. Positions 18-37 (QAQMADEIGISLTSYKKYES) form a DNA-binding region, H-T-H motif.

In terms of biological role, transcriptional repressor of the integrated CTXPhi phage gene rstA2. The sequence is that of Cryptic phage CTXphi transcriptional repressor RstR (rstR1) from Vibrio cholerae serotype O1 (strain ATCC 39315 / El Tor Inaba N16961).